The following is a 367-amino-acid chain: Protein-glutamate methylesterase/protein-glutamine glutaminase 2 (367 aa).

One can recognise a Response regulatory domain in the interval 3–120; sequence SVVVVDDSAF…SLDIVRIEND (118 aa). Asp54 carries the 4-aspartylphosphate modification. Positions 132–174 are disordered; the sequence is RMLRTPRPVRPAPTASAPAQTAQVASAAPATAPSRPAMPATRA. Residues 143–174 are compositionally biased toward low complexity; the sequence is APTASAPAQTAQVASAAPATAPSRPAMPATRA. The 193-residue stretch at 175-367 folds into the CheB-type methylesterase domain; the sequence is SRPVRDVVAI…AAAIMNGLYK (193 aa). Catalysis depends on residues Ser187, His214, and Asp310.

The protein belongs to the CheB family. Post-translationally, phosphorylated by CheA. Phosphorylation of the N-terminal regulatory domain activates the methylesterase activity.

The protein localises to the cytoplasm. It carries out the reaction [protein]-L-glutamate 5-O-methyl ester + H2O = L-glutamyl-[protein] + methanol + H(+). It catalyses the reaction L-glutaminyl-[protein] + H2O = L-glutamyl-[protein] + NH4(+). In terms of biological role, involved in chemotaxis. Part of a chemotaxis signal transduction system that modulates chemotaxis in response to various stimuli. Catalyzes the demethylation of specific methylglutamate residues introduced into the chemoreceptors (methyl-accepting chemotaxis proteins or MCP) by CheR. Also mediates the irreversible deamidation of specific glutamine residues to glutamic acid. The polypeptide is Protein-glutamate methylesterase/protein-glutamine glutaminase 2 (Nitratidesulfovibrio vulgaris (strain ATCC 29579 / DSM 644 / CCUG 34227 / NCIMB 8303 / VKM B-1760 / Hildenborough) (Desulfovibrio vulgaris)).